The primary structure comprises 65 residues: uncharacterized protein (65 aa).

This is an uncharacterized protein from Archaeoglobus fulgidus (strain ATCC 49558 / DSM 4304 / JCM 9628 / NBRC 100126 / VC-16).